Consider the following 533-residue polypeptide: CTP synthase (533 aa).

Residues 1 to 264 (MKYIFVTGGV…GKLVTEKLNL (264 aa)) form an amidoligase domain region. Serine 12 serves as a coordination point for CTP. Serine 12 contributes to the UTP binding site. ATP contacts are provided by residues 13–18 (SLGKGI) and aspartate 70. Mg(2+) contacts are provided by aspartate 70 and glutamate 138. CTP-binding positions include 145–147 (DIE), 185–190 (KTKPTQ), and lysine 221. Residues 185 to 190 (KTKPTQ) and lysine 221 each bind UTP. 237 to 239 (KDA) contributes to the ATP binding site. The region spanning 289–533 (TIGIVGKYIE…HGLVKASIEK (245 aa)) is the Glutamine amidotransferase type-1 domain. Glycine 357 contacts L-glutamine. The active-site Nucleophile; for glutamine hydrolysis is the cysteine 384. L-glutamine is bound by residues 385–388 (LGMQ), glutamate 407, and arginine 464. Catalysis depends on residues histidine 509 and glutamate 511.

This sequence belongs to the CTP synthase family. In terms of assembly, homotetramer.

The catalysed reaction is UTP + L-glutamine + ATP + H2O = CTP + L-glutamate + ADP + phosphate + 2 H(+). The enzyme catalyses L-glutamine + H2O = L-glutamate + NH4(+). It catalyses the reaction UTP + NH4(+) + ATP = CTP + ADP + phosphate + 2 H(+). It functions in the pathway pyrimidine metabolism; CTP biosynthesis via de novo pathway; CTP from UDP: step 2/2. Allosterically activated by GTP, when glutamine is the substrate; GTP has no effect on the reaction when ammonia is the substrate. The allosteric effector GTP functions by stabilizing the protein conformation that binds the tetrahedral intermediate(s) formed during glutamine hydrolysis. Inhibited by the product CTP, via allosteric rather than competitive inhibition. Its function is as follows. Catalyzes the ATP-dependent amination of UTP to CTP with either L-glutamine or ammonia as the source of nitrogen. Regulates intracellular CTP levels through interactions with the four ribonucleotide triphosphates. This is CTP synthase from Methanococcus maripaludis (strain DSM 14266 / JCM 13030 / NBRC 101832 / S2 / LL).